A 204-amino-acid chain; its full sequence is LexA repressor (204 aa).

The segment at residues 27 to 47 is a DNA-binding region (H-T-H motif); it reads VREIGEAVGLASSSTVHGHLA. Catalysis depends on for autocatalytic cleavage activity residues serine 126 and lysine 164.

The protein belongs to the peptidase S24 family. As to quaternary structure, homodimer.

The enzyme catalyses Hydrolysis of Ala-|-Gly bond in repressor LexA.. Its function is as follows. Represses a number of genes involved in the response to DNA damage (SOS response), including recA and lexA. In the presence of single-stranded DNA, RecA interacts with LexA causing an autocatalytic cleavage which disrupts the DNA-binding part of LexA, leading to derepression of the SOS regulon and eventually DNA repair. The chain is LexA repressor from Listeria monocytogenes serotype 4b (strain CLIP80459).